Consider the following 521-residue polypeptide: Circadian clock oscillator protein KaiC (521 aa).

KaiC domains are found at residues 1 to 248 and 262 to 521; these read MNEP…INIF and ARIS…LDEE. The ATP site is built by Gly50, Thr51, Gly52, Lys53, Thr54, Leu55, Ser90, Lys225, Leu226, Arg227, Thr229, His231, Thr241, Thr291, Gly292, Thr293, Gly294, Lys295, Thr296, and Leu297. Mg(2+) is bound at residue Thr54. Position 296 (Thr296) interacts with Mg(2+). Position 319 (Glu319) interacts with Mg(2+). Trp332 provides a ligand contact to ATP. Phosphoserine; by autocatalysis is present on Ser432. Residue Thr433 is modified to Phosphothreonine; by autocatalysis. ATP is bound by residues Arg452, Lys458, Met459, Arg460, Ser462, His464, and Lys466.

The protein belongs to the KaiC family. Homohexamer; hexamerization is dependent on ATP-binding. The KaiABC complex composition changes during the circadian cycle to control KaiC phosphorylation. Complexes KaiC(6), KaiA(2-4):KaiC(6), KaiB(6):KaiC(6) and KaiC(6):KaiB(6):KaiA(12) are among the most important forms, many form cooperatively. KaiC interacts with SasA, activating its autokinase function and leading to RpaA activation. Requires Mg(2+) as cofactor. In terms of processing, phosphorylated on serine and threonine residues by autocatalysis. Has a 4 step phosphorylation cycle; the autokinase acts first on Thr-433, then Ser-432. When Ser-432 is modified KaiC switches to an autophosphatase mode, acting first on phospho-Thr-433 then phospho-Ser-432.

The catalysed reaction is L-seryl-[protein] + ATP = O-phospho-L-seryl-[protein] + ADP + H(+). It carries out the reaction L-threonyl-[protein] + ATP = O-phospho-L-threonyl-[protein] + ADP + H(+). The enzyme catalyses ATP + H2O = ADP + phosphate + H(+). Its activity is regulated as follows. The interaction with KaiA enhances its phosphorylation status, while the interaction with KaiB decreases it. Its function is as follows. Central component of the KaiABC oscillator complex, which constitutes the main circadian regulator in cyanobacteria. Complex composition changes during the circadian cycle to control KaiC phosphorylation. KaiA stimulates KaiC autophosphorylation, while KaiB sequesters KaiA, leading to KaiC autodephosphorylation. Clock output pathways impact the RpaA transcriptional regulator. KaiC enhances the autophosphorylation activity of SasA, which then transfers its phosphate group to RpaA to activate it. KaiB and KaiC together enhance the phospho-RpaA dephosphatase activity of CikA. Functionally, has a weak, temperature-independent ATPase activity; ATPase activity defines the circadian period. The phosphorylation state of KaiC modulates its ATPase activity and effects KaiB binding. This chain is Circadian clock oscillator protein KaiC, found in Rippkaea orientalis (strain PCC 8801 / RF-1) (Cyanothece sp. (strain PCC 8801)).